Consider the following 340-residue polypeptide: S-adenosylmethionine:tRNA ribosyltransferase-isomerase (340 aa).

The protein belongs to the QueA family. In terms of assembly, monomer.

It localises to the cytoplasm. It catalyses the reaction 7-aminomethyl-7-carbaguanosine(34) in tRNA + S-adenosyl-L-methionine = epoxyqueuosine(34) in tRNA + adenine + L-methionine + 2 H(+). The protein operates within tRNA modification; tRNA-queuosine biosynthesis. Transfers and isomerizes the ribose moiety from AdoMet to the 7-aminomethyl group of 7-deazaguanine (preQ1-tRNA) to give epoxyqueuosine (oQ-tRNA). The chain is S-adenosylmethionine:tRNA ribosyltransferase-isomerase from Campylobacter concisus (strain 13826).